The sequence spans 382 residues: UDP-4-amino-4-deoxy-L-arabinose--oxoglutarate aminotransferase (382 aa).

At Lys183 the chain carries N6-(pyridoxal phosphate)lysine.

This sequence belongs to the DegT/DnrJ/EryC1 family. ArnB subfamily. Homodimer. Pyridoxal 5'-phosphate serves as cofactor.

The enzyme catalyses UDP-4-amino-4-deoxy-beta-L-arabinose + 2-oxoglutarate = UDP-beta-L-threo-pentopyranos-4-ulose + L-glutamate. It functions in the pathway nucleotide-sugar biosynthesis; UDP-4-deoxy-4-formamido-beta-L-arabinose biosynthesis; UDP-4-deoxy-4-formamido-beta-L-arabinose from UDP-alpha-D-glucuronate: step 2/3. Its pathway is bacterial outer membrane biogenesis; lipopolysaccharide biosynthesis. Its function is as follows. Catalyzes the conversion of UDP-4-keto-arabinose (UDP-Ara4O) to UDP-4-amino-4-deoxy-L-arabinose (UDP-L-Ara4N). The modified arabinose is attached to lipid A and is required for resistance to polymyxin and cationic antimicrobial peptides. The sequence is that of UDP-4-amino-4-deoxy-L-arabinose--oxoglutarate aminotransferase from Pseudomonas aeruginosa (strain LESB58).